The chain runs to 831 residues: Periplasmic nitrate reductase (831 aa).

The segment at residues 1–29 is a signal peptide (tat-type signal); that stretch reads MKISRRDFIKQTAITATASVAGVTLPAGA. Residues 41-97 enclose the 4Fe-4S Mo/W bis-MGD-type domain; that stretch reads LKWSKAPCRFCGTGCGVTVAVKDNKVVATQGDPQAEVNKGLNCVKGYFLSKIMYGQD. Cys-48, Cys-51, Cys-55, and Cys-83 together coordinate [4Fe-4S] cluster. Residues Lys-85, Gln-152, Asn-177, Cys-181, 214–221, 245–249, 264–266, Met-375, Gln-379, Asn-485, 511–512, Lys-534, Asp-561, and 721–730 each bind Mo-bis(molybdopterin guanine dinucleotide); these read WGSNMAEM, STFTH, QTD, SD, and TGRVLEHWHS. A substrate-binding site is contributed by Trp-797. The Mo-bis(molybdopterin guanine dinucleotide) site is built by Asn-805 and Lys-822.

It belongs to the prokaryotic molybdopterin-containing oxidoreductase family. NasA/NapA/NarB subfamily. In terms of assembly, component of the periplasmic nitrate reductase NapAB complex composed of NapA and NapB. [4Fe-4S] cluster is required as a cofactor. Mo-bis(molybdopterin guanine dinucleotide) serves as cofactor. Predicted to be exported by the Tat system. The position of the signal peptide cleavage has been experimentally proven.

The protein localises to the periplasm. It catalyses the reaction 2 Fe(II)-[cytochrome] + nitrate + 2 H(+) = 2 Fe(III)-[cytochrome] + nitrite + H2O. In terms of biological role, catalytic subunit of the periplasmic nitrate reductase complex NapAB. Receives electrons from NapB and catalyzes the reduction of nitrate to nitrite. This Cupriavidus necator (strain ATCC 17699 / DSM 428 / KCTC 22496 / NCIMB 10442 / H16 / Stanier 337) (Ralstonia eutropha) protein is Periplasmic nitrate reductase.